Reading from the N-terminus, the 248-residue chain is MRILIANDDGLDALGIQTLAKYLQREYAILVVAPDRNRSGASNSLTLSRPIQPVKVVEGQYRVDGTPTDCVNLALSGVIDGDVDLVVSGINHGANLGDDVIYSGTVAAAMEARHLGRPALAVSLVGNLHFDTAAKVIMQLLKDSHTLELPAGILLNINVPDVPYSELKGIQVTRLGYRHKAQAPISAQHPKGIPSFWIGALSEPHDVSEGTDFCAVSKGYVSITPIHTDMTCYEARSPLTKWTDTITL.

A divalent metal cation contacts are provided by Asp-8, Asp-9, Ser-39, and Asn-91.

The protein belongs to the SurE nucleotidase family. A divalent metal cation serves as cofactor.

The protein resides in the cytoplasm. The catalysed reaction is a ribonucleoside 5'-phosphate + H2O = a ribonucleoside + phosphate. Its function is as follows. Nucleotidase that shows phosphatase activity on nucleoside 5'-monophosphates. This chain is 5'-nucleotidase SurE, found in Marinomonas sp. (strain MWYL1).